We begin with the raw amino-acid sequence, 380 residues long: ER-phagy receptor 1 (380 aa).

The 66-residue stretch at 9-74 (DCYEILQVNH…DKRKWHEKDY (66 aa)) folds into the J domain. Residues 270-294 (IMCMVCNKNFRSQNQLENHENSKKH) form a C2H2-type zinc finger. The tract at residues 307–337 (KHAKEAQKNAESNKQPEDAPSESPYSNKVSS) is disordered. A Phosphoserine modification is found at S344. Residues 352–355 (FTFV) carry the AIM motif. An FFAT motif is present at residues 361–367 (EFYTASE).

As to quaternary structure, interacts (via the AIM motif) with atg8. Interacts (via the FFAT motif) with the vesicle-associated membrane protein-associated protein (VAP) family proteins scs2 and scs22.

The protein resides in the endoplasmic reticulum. It localises to the preautophagosomal structure. In terms of biological role, reticulophagy receptor required for autophagosomal sequestration of endoplasmic reticulum (ER) membranes during ER stress. Confers resistance to ER stress by promoting the autophagic degradation of the ER (ER-phagy or reticulophagy). Acts as a bridging molecule to mediate the association between atg8 on the autophagic membrane and the vesicle-associated membrane protein-associated proteins (VAPs) scs2 and scs22 on the ER. May play a role in meiosis. The sequence is that of ER-phagy receptor 1 from Schizosaccharomyces pombe (strain 972 / ATCC 24843) (Fission yeast).